The following is a 627-amino-acid chain: RNA interference defective protein 10 (627 aa).

3 disordered regions span residues 1 to 31 (MSNH…VRQN), 467 to 487 (QRDT…HDQY), and 523 to 589 (SSVR…SEDY). Basic and acidic residues-rich tracts occupy residues 7–16 (NFRDYQREGI), 467–478 (QRDTDEQYDVHQ), and 526–537 (REPEHPSARSRD).

The protein belongs to the maelstrom family. In terms of assembly, interacts with rde-11 (via RING-type zinc finger domain). Interacts with ergo-1.

Functionally, in complex with rde-11, required in the endogenous and exogenous siRNA pathway for biogenesis and accumulation of secondary small interfering RNA (siRNA) intermediates, such as 22G-siRNAs derived from ergo-1 targets. In Caenorhabditis elegans, this protein is RNA interference defective protein 10.